A 127-amino-acid polypeptide reads, in one-letter code: MKTALLVLLVLAVATSPAWALRCHVCTNSANCKNPQVCPSNFYFCKTVTSVEPLNGNLVRKECANSCTSDYSQQGHVSSGSEVTQCCQTDLCNERLVSAAPGHALLSSVTLGLATSLSLLTVMALCL.

Positions 1–20 (MKTALLVLLVLAVATSPAWA) are cleaved as a signal peptide. The 88-residue stretch at 21-108 (LRCHVCTNSA…AAPGHALLSS (88 aa)) folds into the UPAR/Ly6 domain. Disulfide bonds link cysteine 23-cysteine 45, cysteine 26-cysteine 32, cysteine 38-cysteine 63, cysteine 67-cysteine 86, and cysteine 87-cysteine 92. Serine 98 carries GPI-anchor amidated serine lipidation. The propeptide at 99-127 (AAPGHALLSSVTLGLATSLSLLTVMALCL) is removed in mature form.

Lymphoid cells lacking Ly6d, called ALP (all-lymphoid progenitor), retain full lymphoid potential and early thymic seeding activity, whereas cells containing Ly6d, called BLP (B-cell-biased lymphoid progenitor), up-regulate the B-cell specifying factors Ebf1 and Pax5 and behave essentially as B-cell progenitors (at protein level). Thymocytes and B-cells.

It is found in the cell membrane. May act as a specification marker at earliest stage specification of lymphocytes between B- and T-cell development. Marks the earliest stage of B-cell specification. The polypeptide is Lymphocyte antigen 6D (Ly6d) (Mus musculus (Mouse)).